The following is an 89-amino-acid chain: Small ribosomal subunit protein uS15 (89 aa).

It belongs to the universal ribosomal protein uS15 family. In terms of assembly, part of the 30S ribosomal subunit. Forms a bridge to the 50S subunit in the 70S ribosome, contacting the 23S rRNA.

One of the primary rRNA binding proteins, it binds directly to 16S rRNA where it helps nucleate assembly of the platform of the 30S subunit by binding and bridging several RNA helices of the 16S rRNA. In terms of biological role, forms an intersubunit bridge (bridge B4) with the 23S rRNA of the 50S subunit in the ribosome. This is Small ribosomal subunit protein uS15 from Limosilactobacillus fermentum (strain NBRC 3956 / LMG 18251) (Lactobacillus fermentum).